We begin with the raw amino-acid sequence, 214 residues long: Octanoyltransferase (214 aa).

Residues 36–214 (GRESEMVWLL…QQKFDTIFLQ (179 aa)) form the BPL/LPL catalytic domain. Substrate-binding positions include 75-82 (RGGKYSYH), 147-149 (AFG), and 160-162 (GFS). The active-site Acyl-thioester intermediate is the C178.

It belongs to the LipB family.

The protein localises to the cytoplasm. It catalyses the reaction octanoyl-[ACP] + L-lysyl-[protein] = N(6)-octanoyl-L-lysyl-[protein] + holo-[ACP] + H(+). It functions in the pathway protein modification; protein lipoylation via endogenous pathway; protein N(6)-(lipoyl)lysine from octanoyl-[acyl-carrier-protein]: step 1/2. Functionally, catalyzes the transfer of endogenously produced octanoic acid from octanoyl-acyl-carrier-protein onto the lipoyl domains of lipoate-dependent enzymes. Lipoyl-ACP can also act as a substrate although octanoyl-ACP is likely to be the physiological substrate. The chain is Octanoyltransferase from Anaplasma marginale (strain Florida).